The chain runs to 612 residues: UvrABC system protein C (612 aa).

Positions 18 to 96 (TRPGVYRMMD…IKTLKPPYNI (79 aa)) constitute a GIY-YIG domain. A UVR domain is found at 208–243 (PEIINETIQQMEVASAQLDFERAAVLRDQVDYLRRV).

Belongs to the UvrC family. In terms of assembly, interacts with UvrB in an incision complex.

It is found in the cytoplasm. Functionally, the UvrABC repair system catalyzes the recognition and processing of DNA lesions. UvrC both incises the 5' and 3' sides of the lesion. The N-terminal half is responsible for the 3' incision and the C-terminal half is responsible for the 5' incision. The protein is UvrABC system protein C of Hahella chejuensis (strain KCTC 2396).